The primary structure comprises 78 residues: UPF0369 protein RP167 (78 aa).

It belongs to the SDHAF4 family.

The chain is UPF0369 protein RP167 from Rickettsia prowazekii (strain Madrid E).